Consider the following 294-residue polypeptide: 4-hydroxy-tetrahydrodipicolinate synthase (294 aa).

Residue threonine 45 coordinates pyruvate. The active-site Proton donor/acceptor is tyrosine 133. Residue lysine 161 is the Schiff-base intermediate with substrate of the active site. Isoleucine 203 serves as a coordination point for pyruvate.

It belongs to the DapA family. Homotetramer; dimer of dimers.

The protein localises to the cytoplasm. The catalysed reaction is L-aspartate 4-semialdehyde + pyruvate = (2S,4S)-4-hydroxy-2,3,4,5-tetrahydrodipicolinate + H2O + H(+). Its pathway is amino-acid biosynthesis; L-lysine biosynthesis via DAP pathway; (S)-tetrahydrodipicolinate from L-aspartate: step 3/4. Functionally, catalyzes the condensation of (S)-aspartate-beta-semialdehyde [(S)-ASA] and pyruvate to 4-hydroxy-tetrahydrodipicolinate (HTPA). This is 4-hydroxy-tetrahydrodipicolinate synthase from Shewanella pealeana (strain ATCC 700345 / ANG-SQ1).